The chain runs to 32 residues: Calichemicin antitumor antibiotic biosynthesis protein (32 aa).

The polypeptide is Calichemicin antitumor antibiotic biosynthesis protein (Micromonospora echinospora (Micromonospora purpurea)).